The primary structure comprises 404 residues: S-adenosylmethionine synthase (404 aa).

His-18 lines the ATP pocket. Mg(2+) is bound at residue Asp-20. Glu-46 serves as a coordination point for K(+). Residues Glu-59 and Gln-102 each coordinate L-methionine. Residues Gln-102 to Thr-112 form a flexible loop region. ATP-binding positions include Asp-177–Lys-179, Lys-249–Phe-250, Asp-258, Arg-264–Lys-265, Ala-281, and Lys-285. Asp-258 contributes to the L-methionine binding site. Residue Lys-289 coordinates L-methionine.

This sequence belongs to the AdoMet synthase family. In terms of assembly, homotetramer; dimer of dimers. Mg(2+) is required as a cofactor. Requires K(+) as cofactor.

The protein localises to the cytoplasm. It carries out the reaction L-methionine + ATP + H2O = S-adenosyl-L-methionine + phosphate + diphosphate. It functions in the pathway amino-acid biosynthesis; S-adenosyl-L-methionine biosynthesis; S-adenosyl-L-methionine from L-methionine: step 1/1. In terms of biological role, catalyzes the formation of S-adenosylmethionine (AdoMet) from methionine and ATP. The overall synthetic reaction is composed of two sequential steps, AdoMet formation and the subsequent tripolyphosphate hydrolysis which occurs prior to release of AdoMet from the enzyme. The chain is S-adenosylmethionine synthase from Nocardia farcinica (strain IFM 10152).